The following is a 246-amino-acid chain: Phosphate import ATP-binding protein PstB (246 aa).

Positions 3-241 (AKTTNLNLFY…PKQEKTKAYL (239 aa)) constitute an ABC transporter domain. 35–42 (GASGCGKS) serves as a coordination point for ATP.

The protein belongs to the ABC transporter superfamily. Phosphate importer (TC 3.A.1.7) family. In terms of assembly, the complex is composed of two ATP-binding proteins (PstB), two transmembrane proteins (PstC and PstA) and a solute-binding protein (PstS).

It localises to the cell inner membrane. The catalysed reaction is phosphate(out) + ATP + H2O = ADP + 2 phosphate(in) + H(+). In terms of biological role, part of the ABC transporter complex PstSACB involved in phosphate import. Responsible for energy coupling to the transport system. This chain is Phosphate import ATP-binding protein PstB, found in Campylobacter jejuni subsp. jejuni serotype O:2 (strain ATCC 700819 / NCTC 11168).